We begin with the raw amino-acid sequence, 125 residues long: Large ribosomal subunit protein bL12 (125 aa).

It belongs to the bacterial ribosomal protein bL12 family. Homodimer. Part of the ribosomal stalk of the 50S ribosomal subunit. Forms a multimeric L10(L12)X complex, where L10 forms an elongated spine to which 2 to 4 L12 dimers bind in a sequential fashion. Binds GTP-bound translation factors.

Forms part of the ribosomal stalk which helps the ribosome interact with GTP-bound translation factors. Is thus essential for accurate translation. This Campylobacter jejuni (strain RM1221) protein is Large ribosomal subunit protein bL12.